The primary structure comprises 231 residues: Lipoprotein-releasing system ATP-binding protein LolD (231 aa).

The region spanning 6-231 (LKCQSVHKVY…VLAKVAPNSL (226 aa)) is the ABC transporter domain. An ATP-binding site is contributed by 42–49 (GASGSGKS).

Belongs to the ABC transporter superfamily. Lipoprotein translocase (TC 3.A.1.125) family. As to quaternary structure, the complex is composed of two ATP-binding proteins (LolD) and two transmembrane proteins (LolC and LolE).

Its subcellular location is the cell inner membrane. Functionally, part of the ABC transporter complex LolCDE involved in the translocation of mature outer membrane-directed lipoproteins, from the inner membrane to the periplasmic chaperone, LolA. Responsible for the formation of the LolA-lipoprotein complex in an ATP-dependent manner. In Hahella chejuensis (strain KCTC 2396), this protein is Lipoprotein-releasing system ATP-binding protein LolD.